The following is a 377-amino-acid chain: Nitric oxide reductase FlRd-NAD(+) reductase (377 aa).

It belongs to the FAD-dependent oxidoreductase family. The cofactor is FAD.

Its subcellular location is the cytoplasm. The enzyme catalyses 2 reduced [nitric oxide reductase rubredoxin domain] + NAD(+) + H(+) = 2 oxidized [nitric oxide reductase rubredoxin domain] + NADH. Its pathway is nitrogen metabolism; nitric oxide reduction. One of at least two accessory proteins for anaerobic nitric oxide (NO) reductase. Reduces the rubredoxin moiety of NO reductase. This is Nitric oxide reductase FlRd-NAD(+) reductase from Escherichia coli O6:H1 (strain CFT073 / ATCC 700928 / UPEC).